The primary structure comprises 838 residues: DNA gyrase subunit A (838 aa).

N-acetylthreonine is present on Thr-2. The Topo IIA-type catalytic domain occupies 41–510 (LPEVRDGLKP…ADGDVSDEDL (470 aa)). Tyr-129 acts as the O-(5'-phospho-DNA)-tyrosine intermediate in catalysis. Residues Asp-504, Ser-506, Glu-508, and Asp-515 each contribute to the Ca(2+) site. In terms of domain architecture, EF-hand spans 504–516 (DVSDEDLIAREDV). Positions 514–838 (EDVVVTITET…DANGADQTGN (325 aa)) are C-terminal domain CTD. The GyrA-box signature appears at 537-543 (QKRGGKG). Positions 743 to 749 (QGRGGKG) match the GyrA-box-1 motif.

It belongs to the type II topoisomerase GyrA/ParC subunit family. In terms of assembly, heterotetramer, composed of two GyrA and two GyrB chains. In the heterotetramer, GyrA contains the active site tyrosine that forms a transient covalent intermediate with DNA, while GyrB binds cofactors and catalyzes ATP hydrolysis. It depends on Ca(2+) as a cofactor.

Its subcellular location is the cytoplasm. The catalysed reaction is ATP-dependent breakage, passage and rejoining of double-stranded DNA.. With respect to regulation, DNA supercoiling inhibited by (fluoro)quinoline antibiotics such as sparfloxacin and levofloxacin, which usually act on GyrA. DNA supercoiling inhibited by the coumarin antibiotic novobiocin which acts on GyrB. Quinolones lead to gyrase-mediated dsDNA cleavage while preventing reclosure. DNA supercoiling activity inhibited by aminopyrazinamide and pyrrolamide derivatives, probably via effects on the GyrB subunit. DNA relaxation inhibited by ATP and its analogs. DNA supercoiling, relaxation, decatenation and quinolone-promoted DNA cleavage are inhibited by MfpA (50% inhibition occurs at 2 uM), inhibition of gyrase activities is enhanced in a concentration-dependent manner by MfpA. Functionally, a type II topoisomerase that negatively supercoils closed circular double-stranded (ds) DNA in an ATP-dependent manner to maintain chromosomes in an underwound state, while in the absence of ATP it relaxes supercoiled dsDNA. Also catalyzes the interconversion of other topological isomers of dsDNA rings, including catenanes. Gyrase from M.tuberculosis has higher decatenation than supercoiling activity compared to E.coli; as M.tuberculosis only has 1 type II topoisomerase, gyrase has to fulfill the decatenation function of topoisomerase IV as well. At comparable concentrations M.tuberculosis gyrase cannot introduce as many negative supercoils into DNA as the E.coli enzyme, and its ATPase activity is lower, perhaps because it does not couple DNA wrapping and ATP binding as well as E.coli. Negative supercoiling favors strand separation, and DNA replication, transcription, recombination and repair, all of which involve strand separation. Type II topoisomerases break and join 2 DNA strands simultaneously in an ATP-dependent manner. This chain is DNA gyrase subunit A, found in Mycobacterium tuberculosis (strain ATCC 25618 / H37Rv).